The following is a 375-amino-acid chain: Citrate synthase (375 aa).

Residues His-266 and Asp-317 contribute to the active site.

This sequence belongs to the citrate synthase family. Homohexamer.

It catalyses the reaction oxaloacetate + acetyl-CoA + H2O = citrate + CoA + H(+). Its pathway is carbohydrate metabolism; tricarboxylic acid cycle; isocitrate from oxaloacetate: step 1/2. Its activity is regulated as follows. Allosterically inhibited by NADH. The sequence is that of Citrate synthase (gltA) from Mycolicibacterium smegmatis (Mycobacterium smegmatis).